Consider the following 983-residue polypeptide: Serine/threonine-protein kinase N2 (983 aa).

One can recognise an REM-1 1 domain in the interval 33-109 (KLDFSDTMVQ…LQELNAHIVV (77 aa)). Position 77 is an N6-acetyllysine (K77). The disordered stretch occupies residues 107-135 (IVVSDPEDSTDCPRTPDTPNSDSRSSTSN). Residue S110 is modified to Phosphoserine. T121 and T124 each carry phosphothreonine. Low complexity predominate over residues 121–135 (TPDTPNSDSRSSTSN). 2 REM-1 domains span residues 121–203 (TPDT…TNEL) and 204–284 (AFDN…ELPR). S301, S305, S359, and S361 each carry phosphoserine. Positions 351-382 (TSVALPGWSPSDNRSSFMSRTSKSKSGSSRNL) are disordered. In terms of domain architecture, C2 spans 352–472 (SVALPGWSPS…LYLEPQGTLF (121 aa)). Residues 364-380 (RSSFMSRTSKSKSGSSR) are compositionally biased toward low complexity. The segment at 381–462 (NLLKTDDLSN…FLDNQRHGMC (82 aa)) is necessary to rescue apical junction formation. Phosphoserine occurs at positions 534, 582, 619, and 630. A disordered region spans residues 553 to 588 (LAPPASDSTVTKLDFDLEPEPPPAPPRASSLGETDE). The region spanning 656–915 (FRCCAVLGRG…AEDVKKHPFF (260 aa)) is the Protein kinase domain. ATP-binding positions include 662–670 (LGRGHFGKV) and K685. The active-site Proton acceptor is D781. T815 bears the Phosphothreonine; by PDPK1 mark. A necessary for the catalytic activity region spans residues 916–976 (RLTDWSALMD…EEEQEMFHDF (61 aa)). The 68-residue stretch at 916–983 (RLTDWSALMD…HDFDYVADWC (68 aa)) folds into the AGC-kinase C-terminal domain. The residue at position 951 (S951) is a Phosphoserine. Residue T957 is modified to Phosphothreonine. A negatively regulates the responsiveness of the catalytic activity by cardiolipin and is required for optimal activation by the GTP-bound RhoA region spans residues 977–983 (DYVADWC).

Belongs to the protein kinase superfamily. AGC Ser/Thr protein kinase family. PKC subfamily. Interacts (via the REM repeats) with RHOA (GTP-bound form preferentially) and interacts (via the REM repeats) with RAC1 (GTP-bound form preferentially); the interactions induce its autophosphorylation. Interacts with NCK1 (via SH3 domains). Interacts with RHOC. Interacts with NCK1 and NCK2. Interacts with CD44. Interacts (via C-terminal kinase domain) with PDPK1; the interaction stimulates PDPK1 kinase activity. Interacts with MAP3K2; the interaction activates PRK2 kinase activity in a MAP3K2-independent kinase activity. Interacts (via C-terminal domain) with AKT1; the interaction occurs with the C-terminal cleavage product of PRK2 in apoptotic cells. Interacts (via C-terminus) with PTPN13 (via PDZ 3 domain). Interacts with CDK10. In terms of processing, phosphorylated during mitosis. Autophosphorylated. Phosphorylated. Phosphorylated by CDK10. Post-translationally, activated by limited proteolysis with trypsin. Proteolytically cleaved by caspase-3 during the induction of apoptotic cell death. In terms of tissue distribution, ubiquitous. Highly expressed in liver and lung Expressed in astrocytes (at protein level). Ubiquitous.

Its subcellular location is the cytoplasm. The protein localises to the nucleus. It is found in the membrane. It localises to the cell projection. The protein resides in the lamellipodium. Its subcellular location is the cytoskeleton. The protein localises to the cleavage furrow. It is found in the midbody. It localises to the cell junction. It catalyses the reaction L-seryl-[protein] + ATP = O-phospho-L-seryl-[protein] + ADP + H(+). The catalysed reaction is L-threonyl-[protein] + ATP = O-phospho-L-threonyl-[protein] + ADP + H(+). Kinase activity is activated upon binding to GTP-bound Rho1/Rac1 GTPases. Activated by caspase-3 (CASP3) cleavage during apoptosis. Activated by lipids, particularly cardiolipin and to a lesser extent by other acidic phospholipids and unsaturated fatty acids. Two specific sites, Thr-815 (activation loop of the kinase domain) and Thr-957 (turn motif), need to be phosphorylated for its full activation. PKC-related serine/threonine-protein kinase and Rho/Rac effector protein that participates in specific signal transduction responses in the cell. Plays a role in the regulation of cell cycle progression, actin cytoskeleton assembly, cell migration, cell adhesion, tumor cell invasion and transcription activation signaling processes. Phosphorylates CTTN in hyaluronan-induced astrocytes and hence decreases CTTN ability to associate with filamentous actin. Phosphorylates HDAC5, therefore lead to impair HDAC5 import. Direct RhoA target required for the regulation of the maturation of primordial junctions into apical junction formation in bronchial epithelial cells. Required for G2/M phases of the cell cycle progression and abscission during cytokinesis in a ECT2-dependent manner. Stimulates FYN kinase activity that is required for establishment of skin cell-cell adhesion during keratinocytes differentiation. Regulates epithelial bladder cells speed and direction of movement during cell migration and tumor cell invasion. Inhibits Akt pro-survival-induced kinase activity. Mediates Rho protein-induced transcriptional activation via the c-fos serum response factor (SRF). Involved in the negative regulation of ciliogenesis. The protein is Serine/threonine-protein kinase N2 (Pkn2) of Mus musculus (Mouse).